A 416-amino-acid polypeptide reads, in one-letter code: Protein P47 (416 aa).

This sequence belongs to the TULIP P47 family. Part of a crude toxin extract that includes BoNTA2/NTNH, P47, OrfX2 and OrfX3; OrfX1 was not detected.

In terms of biological role, part of a botulinum neurotoxin type A2 (BoNT) locus; may be part of a progenitor toxin complex required to protect BoNT during its passage through the host gastrointestinal tract. The chain is Protein P47 from Clostridium botulinum (strain Kyoto / Type A2).